The primary structure comprises 292 residues: Undecaprenyl-diphosphatase (292 aa).

7 helical membrane passes run 1 to 21 (MSLV…FLPV), 46 to 66 (FVTI…RADI), 90 to 110 (LGWY…LLEH), 114 to 134 (ALGN…LLAA), 192 to 212 (FLLS…STVP), 225 to 245 (VVGT…LLAW), and 253 to 273 (VFVV…LSGV).

It belongs to the UppP family.

It localises to the cell inner membrane. It carries out the reaction di-trans,octa-cis-undecaprenyl diphosphate + H2O = di-trans,octa-cis-undecaprenyl phosphate + phosphate + H(+). Functionally, catalyzes the dephosphorylation of undecaprenyl diphosphate (UPP). Confers resistance to bacitracin. The chain is Undecaprenyl-diphosphatase from Anaeromyxobacter dehalogenans (strain 2CP-1 / ATCC BAA-258).